A 503-amino-acid polypeptide reads, in one-letter code: TGF-beta receptor type-1 (503 aa).

Positions 1-33 (MEAAVAAPRPRLLLLVLAAAAAAAAALLPGATA) are cleaved as a signal peptide. Over 34 to 126 (LQCFCHLCTK…SSPGLGPVEL (93 aa)) the chain is Extracellular. Intrachain disulfides connect Cys36–Cys54, Cys38–Cys41, Cys48–Cys71, Cys86–Cys100, and Cys101–Cys106. N-linked (GlcNAc...) asparagine glycosylation occurs at Asn45. Residues 127 to 147 (AAVIAGPVCFVCISLMLMVYI) traverse the membrane as a helical segment. Topologically, residues 148–503 (CHNRTVIHHR…QLSQQEGIKM (356 aa)) are cytoplasmic. A Phosphoserine modification is found at Ser165. Positions 175 to 204 (TTLKDLIYDMTTSGSGSGLPLLVQRTIART) constitute a GS domain. Residues Thr185 and Thr186 each carry the phosphothreonine; by TGFBR2 modification. A phosphoserine; by TGFBR2 mark is found at Ser187, Ser189, and Ser191. Residues 193-194 (LP) carry the FKBP1A-binding motif. A Protein kinase domain is found at 205–495 (IVLQESIGKG…LRIKKTLSQL (291 aa)). Residues 211–219 (IGKGRFGEV) and Lys232 contribute to the ATP site. Lys268 participates in a covalent cross-link: Glycyl lysine isopeptide (Lys-Gly) (interchain with G-Cter in ubiquitin). The active-site Proton acceptor is Asp333. Residue Lys391 forms a Glycyl lysine isopeptide (Lys-Gly) (interchain with G-Cter in SUMO) linkage.

It belongs to the protein kinase superfamily. TKL Ser/Thr protein kinase family. TGFB receptor subfamily. Homodimer; in the endoplasmic reticulum but also at the cell membrane. Heterohexamer; TGFB1, TGFB2 and TGFB3 homodimeric ligands assemble a functional receptor composed of two TGFBR1 and TGFBR2 heterodimers to form a ligand-receptor heterohexamer. The respective affinity of TGBRB1 and TGFBR2 for the ligands may modulate the kinetics of assembly of the receptor and may explain the different biological activities of TGFB1, TGFB2 and TGFB3. Component of a complex composed of TSC22D1 (via N-terminus), TGFBR1 and TGFBR2; the interaction between TSC22D1 and TGFBR1 is inhibited by SMAD7 and promoted by TGFB1. Interacts with CD109; inhibits TGF-beta receptor activation in keratinocytes. Interacts with RBPMS. Interacts (unphosphorylated) with FKBP1A; prevents TGFBR1 phosphorylation by TGFBR2 and stabilizes it in the inactive conformation. Interacts with SMAD2, SMAD3 and ZFYVE9; ZFYVE9 recruits SMAD2 and SMAD3 to the TGF-beta receptor. Interacts with TRAF6 and MAP3K7; induces MAP3K7 activation by TRAF6. Interacts with PARD6A; involved in TGF-beta induced epithelial to mesenchymal transition. Interacts with NEDD4L. Interacts with SMAD7, SMURF1 and SMURF2; SMAD7 recruits NEDD4L, SMURF1 and SMURF2 to the TGF-beta receptor. Interacts with USP15 and VPS39. Interacts with SDCBP (via C-terminus). Interacts with CAV1 and this interaction is impaired in the presence of SDCBP. Interacts with APPL1; interaction is TGF beta dependent; mediates trafficking of the TGFBR1 from the endosomes to the nucleus via microtubules in a TRAF6-dependent manner. Interacts with GPR50; this interaction promotes the constitutive activation of SMAD signaling pathway. Mg(2+) is required as a cofactor. Requires Mn(2+) as cofactor. Phosphorylated at basal levels in the absence of ligand. Activated upon phosphorylation by TGFBR2, mainly in the GS domain. Phosphorylation in the GS domain abrogates FKBP1A-binding. In terms of processing, N-Glycosylated. Post-translationally, ubiquitinated; undergoes ubiquitination catalyzed by several E3 ubiquitin ligases including SMURF1, SMURF2 and NEDD4L2. Results in the proteasomal and/or lysosomal degradation of the receptor thereby negatively regulating its activity. Deubiquitinated by USP15, leading to stabilization of the protein and enhanced TGF-beta signal. Its ubiquitination and proteasome-mediated degradation is negatively regulated by SDCBP. Ubiquitinated by BFAR via'Lys-63'-linked ubiquitination at Lys-268, leading to TGF-beta signaling activation. As to expression, found in all tissues examined, most abundant in placenta and least abundant in brain and heart. Expressed in a variety of cancer cell lines.

The protein resides in the cell membrane. The protein localises to the cell junction. Its subcellular location is the tight junction. It localises to the cell surface. It is found in the membrane raft. The enzyme catalyses L-threonyl-[receptor-protein] + ATP = O-phospho-L-threonyl-[receptor-protein] + ADP + H(+). It catalyses the reaction L-seryl-[receptor-protein] + ATP = O-phospho-L-seryl-[receptor-protein] + ADP + H(+). Kept in an inactive conformation by FKBP1A preventing receptor activation in absence of ligand. CD109 is another inhibitor of the receptor. Transmembrane serine/threonine kinase forming with the TGF-beta type II serine/threonine kinase receptor, TGFBR2, the non-promiscuous receptor for the TGF-beta cytokines TGFB1, TGFB2 and TGFB3. Transduces the TGFB1, TGFB2 and TGFB3 signal from the cell surface to the cytoplasm and is thus regulating a plethora of physiological and pathological processes including cell cycle arrest in epithelial and hematopoietic cells, control of mesenchymal cell proliferation and differentiation, wound healing, extracellular matrix production, immunosuppression and carcinogenesis. The formation of the receptor complex composed of 2 TGFBR1 and 2 TGFBR2 molecules symmetrically bound to the cytokine dimer results in the phosphorylation and the activation of TGFBR1 by the constitutively active TGFBR2. Activated TGFBR1 phosphorylates SMAD2 which dissociates from the receptor and interacts with SMAD4. The SMAD2-SMAD4 complex is subsequently translocated to the nucleus where it modulates the transcription of the TGF-beta-regulated genes. This constitutes the canonical SMAD-dependent TGF-beta signaling cascade. Also involved in non-canonical, SMAD-independent TGF-beta signaling pathways. For instance, TGFBR1 induces TRAF6 autoubiquitination which in turn results in MAP3K7 ubiquitination and activation to trigger apoptosis. Also regulates epithelial to mesenchymal transition through a SMAD-independent signaling pathway through PARD6A phosphorylation and activation. This is TGF-beta receptor type-1 (TGFBR1) from Homo sapiens (Human).